A 151-amino-acid polypeptide reads, in one-letter code: Probable cGMP 3',5'-cyclic phosphodiesterase subunit delta (151 aa).

Belongs to the PDE6D/unc-119 family. In terms of assembly, interacts with Pde6.

The protein localises to the nucleus. The protein resides in the cytoplasm. This chain is Probable cGMP 3',5'-cyclic phosphodiesterase subunit delta, found in Culex quinquefasciatus (Southern house mosquito).